A 99-amino-acid polypeptide reads, in one-letter code: Large ribosomal subunit protein P1 (99 aa).

As to quaternary structure, part of the 50S ribosomal subunit. Homodimer, it forms part of the ribosomal stalk which helps the ribosome interact with GTP-bound translation factors. Forms both a pentameric uL10/P0(P1)2(P1)2 and heptameric uL10/P0(P1)2(P1)2(P1)2 complex, where uL10/P0 forms an elongated spine to which the P1 dimers bind in a sequential fashion. The proportion of heptameric complexes increases during cell growth.

In terms of biological role, forms part of the ribosomal stalk, playing a central role in the interaction of the ribosome with GTP-bound translation factors. The chain is Large ribosomal subunit protein P1 from Methanococcus vannielii.